The following is a 274-amino-acid chain: S-methyl-5'-thioadenosine phosphorylase (274 aa).

Residues Ser20, 62–63 (RH), and 95–96 (SA) each bind phosphate. Met194 provides a ligand contact to substrate. Thr195 serves as a coordination point for phosphate. 218–220 (DYD) contacts substrate.

Belongs to the PNP/MTAP phosphorylase family. MTAP subfamily. As to quaternary structure, homohexamer. Dimer of a homotrimer.

The enzyme catalyses S-methyl-5'-thioadenosine + phosphate = 5-(methylsulfanyl)-alpha-D-ribose 1-phosphate + adenine. Its pathway is amino-acid biosynthesis; L-methionine biosynthesis via salvage pathway; S-methyl-5-thio-alpha-D-ribose 1-phosphate from S-methyl-5'-thioadenosine (phosphorylase route): step 1/1. Its function is as follows. Catalyzes the reversible phosphorylation of S-methyl-5'-thioadenosine (MTA) to adenine and 5-methylthioribose-1-phosphate. Involved in the breakdown of MTA, a major by-product of polyamine biosynthesis. Responsible for the first step in the methionine salvage pathway after MTA has been generated from S-adenosylmethionine. Has broad substrate specificity with 6-aminopurine nucleosides as preferred substrates. This chain is S-methyl-5'-thioadenosine phosphorylase, found in Hyperthermus butylicus (strain DSM 5456 / JCM 9403 / PLM1-5).